A 501-amino-acid chain; its full sequence is Lysine--tRNA ligase (501 aa).

Positions 412 and 419 each coordinate Mg(2+).

It belongs to the class-II aminoacyl-tRNA synthetase family. As to quaternary structure, homodimer. Requires Mg(2+) as cofactor.

The protein localises to the cytoplasm. It carries out the reaction tRNA(Lys) + L-lysine + ATP = L-lysyl-tRNA(Lys) + AMP + diphosphate. The polypeptide is Lysine--tRNA ligase (Chlorobium luteolum (strain DSM 273 / BCRC 81028 / 2530) (Pelodictyon luteolum)).